Consider the following 977-residue polypeptide: Synaptonemal complex protein 2-like (977 aa).

Disordered regions lie at residues leucine 447–alanine 474, glutamine 574–leucine 593, arginine 642–methionine 728, and threonine 804–serine 824. Low complexity predominate over residues serine 449–serine 462. Polar residues predominate over residues alanine 463 to alanine 474. Positions serine 674–glutamate 693 are enriched in basic and acidic residues.

This sequence belongs to the SYCP2 family. Post-translationally, ubiquitinated and gradually degraded by the proteasome during oocyte maturation. In terms of processing, phosphorylated in maturing oocytes, before its degradation. In terms of tissue distribution, expressed in immature oocytes (at protein level). Expressed in the ovary.

It localises to the nucleus. The protein localises to the chromosome. It is found in the centromere. The protein resides in the nucleolus. In terms of biological role, oocyte-specific protein that localizes to centromeres at the dictyate stage and regulates the survival of primordial oocytes. This Xenopus laevis (African clawed frog) protein is Synaptonemal complex protein 2-like (sycp2l).